Consider the following 72-residue polypeptide: Putative snRNP Sm-like protein (72 aa).

The 69-residue stretch at 4-72 (RPLDILNNAL…RGDNVVYVSP (69 aa)) folds into the Sm domain.

Belongs to the snRNP Sm proteins family.

The sequence is that of Putative snRNP Sm-like protein from Methanosarcina acetivorans (strain ATCC 35395 / DSM 2834 / JCM 12185 / C2A).